Here is a 302-residue protein sequence, read N- to C-terminus: L-threonate dehydrogenase (302 aa).

NAD(+) contacts are provided by residues 7–35 and T102; that span reads FHVG…TWGA. Residue K178 is part of the active site. Residue K246 coordinates NAD(+).

Belongs to the HIBADH-related family. L-threonate dehydrogenase subfamily.

It catalyses the reaction L-threonate + NAD(+) = 2-dehydro-L-erythronate + NADH + H(+). In terms of biological role, catalyzes oxidation of L-threonate to 2-oxo-tetronate. Can use either NAD(+) or NADP(+) as cosubstrate, with a preference for NAD(+). The chain is L-threonate dehydrogenase from Escherichia coli O6:H1 (strain CFT073 / ATCC 700928 / UPEC).